The primary structure comprises 159 residues: Protein B1 (159 aa).

Residues 1–15 (MQKNMKTKKTKKRGR) show a composition bias toward basic residues. Disordered stretches follow at residues 1-100 (MQKN…RTRE) and 133-159 (PGHG…DPPR). The segment covering 16–31 (KEGNTPETERRMEPAR) has biased composition (basic and acidic residues). Over residues 85-96 (RGRHIHTRGART) the composition is skewed to basic residues.

The polypeptide is Protein B1 (B1) (Human herpesvirus 6B (strain Z29) (HHV-6 variant B)).